The primary structure comprises 295 residues: Ethanolamine ammonia-lyase small subunit (295 aa).

Adenosylcob(III)alamin-binding residues include V207, E228, and C258.

Belongs to the EutC family. In terms of assembly, the basic unit is a heterodimer which dimerizes to form tetramers. The heterotetramers trimerize; 6 large subunits form a core ring with 6 small subunits projecting outwards. The cofactor is adenosylcob(III)alamin.

It is found in the bacterial microcompartment. The enzyme catalyses ethanolamine = acetaldehyde + NH4(+). It participates in amine and polyamine degradation; ethanolamine degradation. Its function is as follows. Catalyzes the deamination of various vicinal amino-alcohols to oxo compounds. Allows this organism to utilize ethanolamine as the sole source of nitrogen and carbon in the presence of external vitamin B12. The chain is Ethanolamine ammonia-lyase small subunit from Escherichia coli O81 (strain ED1a).